The primary structure comprises 149 residues: Nucleoside diphosphate kinase (149 aa).

ATP is bound by residues Lys9, Phe57, Arg85, Thr91, Arg102, and Asn112. The active-site Pros-phosphohistidine intermediate is His115.

This sequence belongs to the NDK family. In terms of assembly, homotetramer. The cofactor is Mg(2+).

Its subcellular location is the cytoplasm. It catalyses the reaction a 2'-deoxyribonucleoside 5'-diphosphate + ATP = a 2'-deoxyribonucleoside 5'-triphosphate + ADP. The enzyme catalyses a ribonucleoside 5'-diphosphate + ATP = a ribonucleoside 5'-triphosphate + ADP. In terms of biological role, major role in the synthesis of nucleoside triphosphates other than ATP. The ATP gamma phosphate is transferred to the NDP beta phosphate via a ping-pong mechanism, using a phosphorylated active-site intermediate. The protein is Nucleoside diphosphate kinase of Staphylococcus saprophyticus subsp. saprophyticus (strain ATCC 15305 / DSM 20229 / NCIMB 8711 / NCTC 7292 / S-41).